Reading from the N-terminus, the 410-residue chain is Peptidase T (410 aa).

Histidine 78 provides a ligand contact to Zn(2+). Aspartate 80 is a catalytic residue. Residue aspartate 140 participates in Zn(2+) binding. Catalysis depends on glutamate 173, which acts as the Proton acceptor. Zn(2+)-binding residues include glutamate 174, aspartate 196, and histidine 379.

Belongs to the peptidase M20B family. The cofactor is Zn(2+).

It is found in the cytoplasm. The enzyme catalyses Release of the N-terminal residue from a tripeptide.. Cleaves the N-terminal amino acid of tripeptides. The protein is Peptidase T of Pectobacterium carotovorum subsp. carotovorum (strain PC1).